The primary structure comprises 373 residues: C-C chemokine receptor type 2 (373 aa).

Over 1 to 55 the chain is Extracellular; the sequence is MEDNNMLPQFIHGILSTSHSLFTRSIQELDEGATTPYDYDDGEPCHKTSVKQIGA. A helical membrane pass occupies residues 56–83; it reads WILPPLYSLVFIFGFVGNMLVIIILIGC. At 84–93 the chain is on the cytoplasmic side; that stretch reads KKLKSMTDIY. The chain crosses the membrane as a helical span at residues 94–114; it reads LLNLAISDLLFLLTLPFWAHY. At 115–127 the chain is on the extracellular side; it reads AANEWVFGNIMCK. Cysteines 126 and 203 form a disulfide. A helical membrane pass occupies residues 128 to 149; that stretch reads VFTGLYHIGYFGGIFFIILLTI. Over 150-166 the chain is Cytoplasmic; sequence DRYLAIVHAVFALKART. Tyrosine 152 bears the Phosphotyrosine; by JAK2 mark. Residues 167–191 traverse the membrane as a helical segment; sequence VTFGVITSVVTWVVAVFASLPGIIF. Residues 192–219 lie on the Extracellular side of the membrane; that stretch reads TKSKQDDHHYTCGPYFTQLWKNFQTIMR. A helical transmembrane segment spans residues 220–239; sequence NILSLILPLLVMVICYSGIL. Residues 240 to 256 are Cytoplasmic-facing; sequence HTLFRCRNEKKRHRAVR. A helical membrane pass occupies residues 257-281; that stretch reads LIFAIMIVYFLFWTPYNIVLFLTTF. At 282–298 the chain is on the extracellular side; that stretch reads QESLGMSNCVIDKHLDQ. Residues 299-322 traverse the membrane as a helical segment; that stretch reads AMQVTETLGMTHCCINPVIYAFVG. Residues 323–373 lie on the Cytoplasmic side of the membrane; sequence EKFRRYLSIFFRKHIAKRLCKQCPVFYRETADRVSSTFTPSTGEQEVSVGL.

The protein belongs to the G-protein coupled receptor 1 family. In terms of assembly, interacts with ARRB1. Interacts (via extracellular N-terminal region) with beta-defensin DEFB106A/DEFB106B; this interaction may preferentially require specific tyrosine sulfation on CCR2. Interacts with NUP85; the interaction is required for CCR2 clusters formation on the cell membrane and CCR2 signaling. N-glycosylated. Post-translationally, sulfation increases the affinity for both monomeric and dimeric CCL2 with stronger binding to the monomeric form. Binding of sulfated CCR2 to CCL2 promotes conversion of CCL2 from dimer to monomer. As to expression, epressed in mature thymocytes. Detected in monocyte/macrophage cell lines, but not in nonhematopoietic cell lines.

The protein localises to the cell membrane. Functionally, key functional receptor for CCL2 but can also bind CCL7 and CCL12 chemokines. Its binding with CCL2 on monocytes and macrophages mediates chemotaxis and migration induction through the activation of the PI3K cascade, the small G protein Rac and lamellipodium protrusion. Also acts as a receptor for the beta-defensin DEFB106A/DEFB106B. Regulates the expression of T-cell inflammatory cytokines and T-cell differentiation, promoting the differentiation of T-cells into T-helper 17 cells (Th17) during inflammation. Facilitates the export of mature thymocytes by enhancing directional movement of thymocytes to sphingosine-1-phosphate stimulation and up-regulation of S1P1R expression; signals through the JAK-STAT pathway to regulate FOXO1 activity leading to an increased expression of S1P1R. Plays an important role in mediating peripheral nerve injury-induced neuropathic pain. Increases NMDA-mediated synaptic transmission in both dopamine D1 and D2 receptor-containing neurons, which may be caused by MAPK/ERK-dependent phosphorylation of GRIN2B/NMDAR2B. Mediates the recruitment of macrophages and monocytes to the injury site following brain injury. This chain is C-C chemokine receptor type 2 (Ccr2), found in Mus musculus (Mouse).